The sequence spans 382 residues: Mannitol-1-phosphate 5-dehydrogenase (382 aa).

3–14 serves as a coordination point for NAD(+); the sequence is ALHFGAGNIGRG.

It belongs to the mannitol dehydrogenase family.

It carries out the reaction D-mannitol 1-phosphate + NAD(+) = beta-D-fructose 6-phosphate + NADH + H(+). The sequence is that of Mannitol-1-phosphate 5-dehydrogenase from Mannheimia succiniciproducens (strain KCTC 0769BP / MBEL55E).